A 309-amino-acid chain; its full sequence is 4-diphosphocytidyl-2-C-methyl-D-erythritol kinase (309 aa).

Lys28 is an active-site residue. Pro120–Ser130 provides a ligand contact to ATP. Residue Asp162 is part of the active site.

Belongs to the GHMP kinase family. IspE subfamily.

It catalyses the reaction 4-CDP-2-C-methyl-D-erythritol + ATP = 4-CDP-2-C-methyl-D-erythritol 2-phosphate + ADP + H(+). It functions in the pathway isoprenoid biosynthesis; isopentenyl diphosphate biosynthesis via DXP pathway; isopentenyl diphosphate from 1-deoxy-D-xylulose 5-phosphate: step 3/6. Functionally, catalyzes the phosphorylation of the position 2 hydroxy group of 4-diphosphocytidyl-2C-methyl-D-erythritol. In Polaromonas sp. (strain JS666 / ATCC BAA-500), this protein is 4-diphosphocytidyl-2-C-methyl-D-erythritol kinase.